The sequence spans 340 residues: Large ribosomal subunit protein uL10 (340 aa).

The tract at residues 305 to 340 is disordered; that stretch reads APQPAEEKVEEAEEEEEEEEEASEEEALAGLGALFG. Residues 312-331 show a composition bias toward acidic residues; sequence KVEEAEEEEEEEEEASEEEA.

It belongs to the universal ribosomal protein uL10 family. In terms of assembly, part of the 50S ribosomal subunit. Forms part of the ribosomal stalk which helps the ribosome interact with GTP-bound translation factors. Forms a heptameric L10(L12)2(L12)2(L12)2 complex, where L10 forms an elongated spine to which the L12 dimers bind in a sequential fashion.

Functionally, forms part of the ribosomal stalk, playing a central role in the interaction of the ribosome with GTP-bound translation factors. The protein is Large ribosomal subunit protein uL10 of Thermococcus gammatolerans (strain DSM 15229 / JCM 11827 / EJ3).